Reading from the N-terminus, the 156-residue chain is Egg-lysin (156 aa).

The signal sequence occupies residues 1-18 (MKLLVLCVFAMMATLAVS).

As to quaternary structure, monomer. Homodimer. Molecules associate into dimers and then rapidly dissociate again. Interacts (as a monomer) with the egg vitelline layer protein VERL (via VERL repeats); each VERL chain can bind multiple copies of lysin. In terms of tissue distribution, sperm.

The protein localises to the cytoplasmic vesicle. Its subcellular location is the secretory vesicle. It is found in the acrosome lumen. Creates a 3 um hole in the egg vitelline layer through which the sperm passes. Does not have enzyme activity. Species-specific interaction between the sperm protein lysin and the egg protein VERL exposes a basic surface on lysin that may dissociate the egg vitelline layer via electrostatic repulsion. Plays a role in ensuring species-specific fertilization. The polypeptide is Egg-lysin (Haliotis cracherodii (Black abalone)).